A 37-amino-acid polypeptide reads, in one-letter code: Cytochrome b6-f complex subunit 5 (37 aa).

A helical transmembrane segment spans residues 5–25 (LLCGIVLGLIPVTLLGLFVAA).

It belongs to the PetG family. In terms of assembly, the 4 large subunits of the cytochrome b6-f complex are cytochrome b6, subunit IV (17 kDa polypeptide, PetD), cytochrome f and the Rieske protein, while the 4 small subunits are PetG, PetL, PetM and PetN. The complex functions as a dimer.

The protein resides in the cellular thylakoid membrane. Functionally, component of the cytochrome b6-f complex, which mediates electron transfer between photosystem II (PSII) and photosystem I (PSI), cyclic electron flow around PSI, and state transitions. PetG is required for either the stability or assembly of the cytochrome b6-f complex. In Synechococcus sp. (strain WH7803), this protein is Cytochrome b6-f complex subunit 5.